Consider the following 384-residue polypeptide: Dihydrolipoyllysine-residue acetyltransferase component of pyruvate dehydrogenase complex (384 aa).

The Lipoyl-binding domain maps to 2 to 77 (ANEFKFTDVG…SIGQVMAVIG (76 aa)). K43 is modified (N6-lipoyllysine). Residue H356 is part of the active site.

The protein belongs to the 2-oxoacid dehydrogenase family. Forms a 24-polypeptide structural core with octahedral symmetry. (R)-lipoate serves as cofactor.

The catalysed reaction is N(6)-[(R)-dihydrolipoyl]-L-lysyl-[protein] + acetyl-CoA = N(6)-[(R)-S(8)-acetyldihydrolipoyl]-L-lysyl-[protein] + CoA. In terms of biological role, the pyruvate dehydrogenase complex catalyzes the overall conversion of pyruvate to acetyl-CoA and CO(2). It contains multiple copies of three enzymatic components: pyruvate dehydrogenase (E1), dihydrolipoamide acetyltransferase (E2) and lipoamide dehydrogenase (E3). This is Dihydrolipoyllysine-residue acetyltransferase component of pyruvate dehydrogenase complex (pdhC) from Mycoplasma genitalium (strain ATCC 33530 / DSM 19775 / NCTC 10195 / G37) (Mycoplasmoides genitalium).